The following is a 262-amino-acid chain: T-cell surface glycoprotein YE1/48 (262 aa).

Over 1–44 (MSEQEVTYSMVRFHKSAGLQKQVRPEETKGPREAGYRRCSFHWK) the chain is Cytoplasmic. Residues 45 to 66 (FIVIALGIFCFLLLVAVSVLAI) traverse the membrane as a helical; Signal-anchor for type II membrane protein segment. At 67–262 (KIFQYDQQKN…CGKRLDKFPH (196 aa)) the chain is on the extracellular side. Residues Asn86, Asn103, and Asn123 are each glycosylated (N-linked (GlcNAc...) asparagine). A Cell attachment site motif is present at residues 137-139 (RGD). The 120-residue stretch at 138 to 257 (GDKVYWFCYG…VFICICGKRL (120 aa)) folds into the C-type lectin domain. 4 cysteine pairs are disulfide-bonded: Cys145–Cys150, Cys163–Cys251, Cys167–Cys253, and Cys232–Cys245.

In terms of assembly, homodimer; disulfide-linked. High, in T-lymphoma lines, very low in normal lymphocytes.

The protein localises to the membrane. Its function is as follows. Receptor on natural killer (NK) cells for H-2d alleles. Inhibits the activity of NK cells thus preventing cell lysis. The sequence is that of T-cell surface glycoprotein YE1/48 (Klra1) from Mus musculus (Mouse).